Here is a 465-residue protein sequence, read N- to C-terminus: Asparagine--tRNA ligase (465 aa).

This sequence belongs to the class-II aminoacyl-tRNA synthetase family. Homodimer.

The protein resides in the cytoplasm. The enzyme catalyses tRNA(Asn) + L-asparagine + ATP = L-asparaginyl-tRNA(Asn) + AMP + diphosphate + H(+). This chain is Asparagine--tRNA ligase, found in Hahella chejuensis (strain KCTC 2396).